The following is a 361-amino-acid chain: Tetrathionate reductase subunit C (361 aa).

9 consecutive transmembrane segments (helical) span residues 26-46 (FSYA…LALL), 53-73 (AIPM…LGPL), 104-124 (ALYG…FALL), 160-180 (LAAI…MLFF), 193-213 (LMLP…ALIL), 233-253 (GAAA…WGMW), 258-278 (FAAV…TFIL), 288-308 (ITPI…WNLI), and 334-354 (AVSP…IFPM).

It belongs to the NrfD family. Probably composed of three subunits: TtrA, TtrB and TtrC.

It localises to the cell membrane. Part of a membrane-bound tetrathionate reductase that catalyzes the reduction of tetrathionate to thiosulfate. TtrC probably anchors TtrA and TtrB to the external face of the cytoplasmic membrane. May transfer electrons from membrane quinol to TtrB. This chain is Tetrathionate reductase subunit C (ttrC), found in Archaeoglobus fulgidus (strain ATCC 49558 / DSM 4304 / JCM 9628 / NBRC 100126 / VC-16).